The chain runs to 240 residues: HTH-type transcriptional repressor STM4068 (240 aa).

In terms of domain architecture, HTH gntR-type spans 9–77; sequence TPLYKQLFFI…RGSGSVVCSV (69 aa). A DNA-binding region (H-T-H motif) is located at residues 37–56; sequence QKEIARSYNVSLIVVKQAWS.

Represses the expression of the STM4065-STM4067 operon. The protein is HTH-type transcriptional repressor STM4068 of Salmonella typhimurium (strain LT2 / SGSC1412 / ATCC 700720).